The chain runs to 1274 residues: Virulence protein SSD1 (1274 aa).

Positions 1–13 (MSSSQDYNNNSNN) are enriched in low complexity. 4 disordered regions span residues 1–38 (MSSS…SELT), 61–124 (LEEK…GHSR), 138–337 (ANQK…TLFA), and 413–488 (KEKE…DDVE). Over residues 19 to 32 (SSRKGKNLHVAHRR) the composition is skewed to basic residues. Over residues 72–81 (FTYPSAQGSS) the composition is skewed to polar residues. Over residues 95 to 106 (NRSSHSRSSSIN) the composition is skewed to low complexity. Polar residues predominate over residues 139–152 (NQKQSNRNSLSPTI). The segment covering 177-187 (GDTSGQSSSSH) has biased composition (low complexity). Positions 248–263 (SGSNTNTDGINSNWRA) are enriched in polar residues. Residues 264–282 (QQQSPQQQQRQGGLLEPPQ) are compositionally biased toward low complexity. The span at 320–330 (QQGGHQGGGNN) shows a compositional bias: gly residues. Positions 413–437 (KEKEEKKRRKDNTLHSRPLTDDIHN) are enriched in basic and acidic residues. Over residues 438–453 (DATSAPNTAEGSVTGT) the composition is skewed to polar residues. The 76-residue stretch at 562 to 637 (VWFKPTDKKV…EIDSILRDNN (76 aa)) folds into the CSD2 domain. The RNB domain maps to 688–1001 (FVDHALHVKR…VHRQLKAVLN (314 aa)). Positions 1050 to 1136 (GQLLCMGTVV…KNKYRTSALQ (87 aa)) constitute a DIS3L2 C-terminal domain. The segment at 1174–1217 (SLKSNELHEVEKDETKSMPSSPTQSEIPKNVRTNSSSRISSSGN) is disordered. Positions 1178–1189 (NELHEVEKDETK) are enriched in basic and acidic residues. Residues 1190–1207 (SMPSSPTQSEIPKNVRTN) show a composition bias toward polar residues.

Belongs to the RNR ribonuclease family.

Functionally, plays a role in resistance to host antimicrobial peptides such as protamine, RP-1, or human beta-defensin-2; allowing colonization of human tissues. Required for resistance to membrane permeabilization and maintenance of mitochondrial membrane potential upon exposure to RP-1. This chain is Virulence protein SSD1 (SSD1), found in Candida albicans (strain SC5314 / ATCC MYA-2876) (Yeast).